A 480-amino-acid polypeptide reads, in one-letter code: Protein nucleotidyltransferase YdiU (480 aa).

Gly-86, Gly-88, Arg-89, Lys-109, Asp-121, Gly-122, Arg-172, and Arg-179 together coordinate ATP. The active-site Proton acceptor is Asp-248. Residues Asn-249 and Asp-258 each coordinate Mg(2+). Asp-258 is a binding site for ATP.

The protein belongs to the SELO family. Mg(2+) is required as a cofactor. Requires Mn(2+) as cofactor.

The enzyme catalyses L-seryl-[protein] + ATP = 3-O-(5'-adenylyl)-L-seryl-[protein] + diphosphate. The catalysed reaction is L-threonyl-[protein] + ATP = 3-O-(5'-adenylyl)-L-threonyl-[protein] + diphosphate. It catalyses the reaction L-tyrosyl-[protein] + ATP = O-(5'-adenylyl)-L-tyrosyl-[protein] + diphosphate. It carries out the reaction L-histidyl-[protein] + UTP = N(tele)-(5'-uridylyl)-L-histidyl-[protein] + diphosphate. The enzyme catalyses L-seryl-[protein] + UTP = O-(5'-uridylyl)-L-seryl-[protein] + diphosphate. The catalysed reaction is L-tyrosyl-[protein] + UTP = O-(5'-uridylyl)-L-tyrosyl-[protein] + diphosphate. Functionally, nucleotidyltransferase involved in the post-translational modification of proteins. It can catalyze the addition of adenosine monophosphate (AMP) or uridine monophosphate (UMP) to a protein, resulting in modifications known as AMPylation and UMPylation. The protein is Protein nucleotidyltransferase YdiU of Salmonella newport (strain SL254).